The following is a 364-amino-acid chain: Aminomethyltransferase (364 aa).

Belongs to the GcvT family. As to quaternary structure, the glycine cleavage system is composed of four proteins: P, T, L and H.

The enzyme catalyses N(6)-[(R)-S(8)-aminomethyldihydrolipoyl]-L-lysyl-[protein] + (6S)-5,6,7,8-tetrahydrofolate = N(6)-[(R)-dihydrolipoyl]-L-lysyl-[protein] + (6R)-5,10-methylene-5,6,7,8-tetrahydrofolate + NH4(+). Its function is as follows. The glycine cleavage system catalyzes the degradation of glycine. The protein is Aminomethyltransferase of Shigella flexneri.